We begin with the raw amino-acid sequence, 600 residues long: Oligopeptide-binding protein OppA (600 aa).

An N-terminal signal peptide occupies residues 1–22; it reads MKKLKVTLLASSVVLAAALLSA. Cys23 is lipidated: N-palmitoyl cysteine. Cys23 is lipidated: S-diacylglycerol cysteine.

The protein belongs to the bacterial solute-binding protein 5 family. The complex is composed of two ATP-binding proteins (OppD and OppF), two transmembrane proteins (OppB and OppC) and a solute-binding protein (OppA).

Its subcellular location is the cell membrane. Part of the ABC transporter complex OppABCDF involved in the uptake of oligopeptides. The chain is Oligopeptide-binding protein OppA (oppA) from Lactococcus lactis subsp. lactis (strain IL1403) (Streptococcus lactis).